A 350-amino-acid polypeptide reads, in one-letter code: Inositol 2-dehydrogenase/D-chiro-inositol 3-dehydrogenase (350 aa).

This sequence belongs to the Gfo/Idh/MocA family. Homotetramer.

The enzyme catalyses myo-inositol + NAD(+) = scyllo-inosose + NADH + H(+). It carries out the reaction 1D-chiro-inositol + NAD(+) = scyllo-inosine + NADH + H(+). The protein operates within polyol metabolism; myo-inositol degradation into acetyl-CoA; acetyl-CoA from myo-inositol: step 1/7. Its function is as follows. Involved in the oxidation of myo-inositol (MI) and D-chiro-inositol (DCI) to 2-keto-myo-inositol (2KMI or 2-inosose) and 1-keto-D-chiro-inositol (1KDCI), respectively. This chain is Inositol 2-dehydrogenase/D-chiro-inositol 3-dehydrogenase, found in Lactiplantibacillus plantarum (strain ATCC BAA-793 / NCIMB 8826 / WCFS1) (Lactobacillus plantarum).